Consider the following 25-residue polypeptide: Kappa-conotoxin RIIIJ (25 aa).

7 positions are modified to 4-hydroxyproline: P2, P3, P7, P8, P13, P15, and P21. Disulfide bonds link C4–C17, C5–C22, and C12–C23.

This sequence belongs to the conotoxin M superfamily. As to expression, expressed by the venom duct.

Its subcellular location is the secreted. In terms of biological role, kappa-conotoxins inhibits voltage-gated potassium channels. This toxin dose-dependently and reversibly inhibits the Kv1.2/KCNA2 channel in mammalia. Does not exert protective effect on cardiac tissue when administered after an ischemic event. The chain is Kappa-conotoxin RIIIJ from Conus radiatus (Rayed cone).